Here is a 2271-residue protein sequence, read N- to C-terminus: Protein Ycf2 (2271 aa).

Gly-1628–Ser-1635 contributes to the ATP binding site.

This sequence belongs to the Ycf2 family.

It localises to the plastid. The protein resides in the chloroplast stroma. Probable ATPase of unknown function. Its presence in a non-photosynthetic plant (Epifagus virginiana) and experiments in tobacco indicate that it has an essential function which is probably not related to photosynthesis. This is Protein Ycf2 from Illicium oligandrum (Star anise).